The following is a 155-amino-acid chain: MADLSALKDIATTAEPAAPVHVKKVDAQGRSYATGKRKDAVARVWIKPGSGKITVNGKPFSDYFARPVLQMILQQPVVAAARDGQFDIDATVAGGGLSGQAGAVRHGISKALTYFEPGLRAVLKRGGFLTRDSRVVERKKYGRAKARRSFQFSKR.

This sequence belongs to the universal ribosomal protein uS9 family.

The chain is Small ribosomal subunit protein uS9 from Sinorhizobium medicae (strain WSM419) (Ensifer medicae).